Reading from the N-terminus, the 590-residue chain is Aspartate--tRNA(Asp/Asn) ligase (590 aa).

Glutamate 176 is an L-aspartate binding site. An aspartate region spans residues 200-203 (QLFK). L-aspartate contacts are provided by arginine 222 and histidine 451. 222–224 (RDE) provides a ligand contact to ATP. Residue glutamate 485 coordinates ATP. Arginine 492 contributes to the L-aspartate binding site. 537–540 (GIDR) is an ATP binding site.

The protein belongs to the class-II aminoacyl-tRNA synthetase family. Type 1 subfamily. In terms of assembly, homodimer.

It is found in the cytoplasm. It catalyses the reaction tRNA(Asx) + L-aspartate + ATP = L-aspartyl-tRNA(Asx) + AMP + diphosphate. Functionally, aspartyl-tRNA synthetase with relaxed tRNA specificity since it is able to aspartylate not only its cognate tRNA(Asp) but also tRNA(Asn). Reaction proceeds in two steps: L-aspartate is first activated by ATP to form Asp-AMP and then transferred to the acceptor end of tRNA(Asp/Asn). The sequence is that of Aspartate--tRNA(Asp/Asn) ligase from Ehrlichia chaffeensis (strain ATCC CRL-10679 / Arkansas).